Here is a 460-residue protein sequence, read N- to C-terminus: tRNA (guanine(37)-N(1))-methyltransferase (460 aa).

Residues His204, 243-244, 271-272, and Asn292 contribute to the S-adenosyl-L-methionine site; these read DL and DA. Over residues 390–428 the composition is skewed to low complexity; that stretch reads ASTTTTPTTSNTNTSTTTSTTSTSTTTTESTNTNNSANN. The tract at residues 390–460 is disordered; that stretch reads ASTTTTPTTS…SIDTNKKLKN (71 aa). The span at 442 to 451 shows a compositional bias: acidic residues; the sequence is DSNETNETDS.

Belongs to the class I-like SAM-binding methyltransferase superfamily. TRM5/TYW2 family. Monomer.

The protein resides in the mitochondrion matrix. The protein localises to the nucleus. Its subcellular location is the cytoplasm. It catalyses the reaction guanosine(37) in tRNA + S-adenosyl-L-methionine = N(1)-methylguanosine(37) in tRNA + S-adenosyl-L-homocysteine + H(+). Specifically methylates the N1 position of guanosine-37 in various cytoplasmic and mitochondrial tRNAs. Methylation is not dependent on the nature of the nucleoside 5' of the target nucleoside. This is the first step in the biosynthesis of wybutosine (yW), a modified base adjacent to the anticodon of tRNAs and required for accurate decoding. In Dictyostelium discoideum (Social amoeba), this protein is tRNA (guanine(37)-N(1))-methyltransferase (trmt5).